The sequence spans 356 residues: Inositol phosphoceramide mannosyltransferase 3 (356 aa).

A helical membrane pass occupies residues 4 to 24 (ILFYFFFFLTLILSATVYLFG). Asn-52 and Asn-146 each carry an N-linked (GlcNAc...) asparagine glycan. 2 helical membrane-spanning segments follow: residues 197-217 (FPYL…IWSA) and 269-289 (WAIF…FIFG). Phosphoserine occurs at positions 307, 353, and 355.

It belongs to the glycosyltransferase 32 family.

It localises to the endoplasmic reticulum membrane. The protein resides in the golgi apparatus. The protein localises to the cis-Golgi network membrane. Its subcellular location is the trans-Golgi network membrane. In terms of biological role, with imt1 and imt2, is required for the synthesis of mannosylinositol phosphoceramide (MIPC). Catalyzes the addition of mannosyl to inositol phosphoceramide (IPC). MIPC is essential for cell morphology, cell-surface distribution of ergosterol, localization for plasma-membrane transporters, and lipid-raft-mediated endocytosis of plasma membrane proteins to the vacuole. The chain is Inositol phosphoceramide mannosyltransferase 3 from Schizosaccharomyces pombe (strain 972 / ATCC 24843) (Fission yeast).